We begin with the raw amino-acid sequence, 295 residues long: Protoheme IX farnesyltransferase 2 (295 aa).

9 helical membrane-spanning segments follow: residues 9–29, 36–56, 83–103, 108–128, 135–155, 163–183, 209–229, 230–250, and 264–284; these read ITKPGIIFGNVLSVAGGFFLA, FALFLAVVIGTSLVVASGCVF, LTLALVYATLLGVAGFSLLYV, LSAFCALIGFIVYVGFYSLWL, GTLVGSLSGAMPPVIGYCAVS, VTLLVMFSLWQMPHSFAIAIF, IVLYVLAFVLATLMLTLGGYA, GLGYLAVAAAMGLYWLYMAWG, and VFGFSILTVTALSVMMGVDSQ.

Belongs to the UbiA prenyltransferase family. Protoheme IX farnesyltransferase subfamily.

The protein resides in the cell inner membrane. It catalyses the reaction heme b + (2E,6E)-farnesyl diphosphate + H2O = Fe(II)-heme o + diphosphate. Its pathway is porphyrin-containing compound metabolism; heme O biosynthesis; heme O from protoheme: step 1/1. In terms of biological role, converts heme B (protoheme IX) to heme O by substitution of the vinyl group on carbon 2 of heme B porphyrin ring with a hydroxyethyl farnesyl side group. This Pseudomonas putida (strain W619) protein is Protoheme IX farnesyltransferase 2.